Here is a 406-residue protein sequence, read N- to C-terminus: Exo-alpha-sialidase (406 aa).

Positions Met1–Ala20 are cleaved as a signal peptide. Residues Arg59, Arg78, Asp84, and Gln148 each coordinate substrate. Asn235 is a glycosylation site (N-linked (GlcNAc...) asparagine). Residues Arg265, Arg322, Arg322–Arg323, Tyr331–Asp332, Lys337, Tyr358, Asp376, and Asp376–Phe378 contribute to the substrate site. Asn396 is a glycosylation site (N-linked (GlcNAc...) asparagine).

It belongs to the glycosyl hydrolase 33 family.

The catalysed reaction is Hydrolysis of alpha-(2-&gt;3)-, alpha-(2-&gt;6)-, alpha-(2-&gt;8)- glycosidic linkages of terminal sialic acid residues in oligosaccharides, glycoproteins, glycolipids, colominic acid and synthetic substrates.. In terms of biological role, sialidase is able to release sialic acid from a wide variety of natural substrates including bovine salivary mucin, colominic acid, bovine fetuin, a serum glycoprotein containing both alpha-2-6 and alpha-2-3-linkages in a ratio of about 3:2, and glycoproteins and glycolipids from thermally denatured human lung epithelial cells. Does not show any trans-sialidase activity since it is able to remove terminal sialic acid residues but is unable to catalyze their transfer to the acceptor substrate. 2-keto-3-deoxynononic acid (KDN) is the preferred substrate and A.fumigatus can utilize KDN as a sole carbon source. The protein is Exo-alpha-sialidase of Aspergillus fumigatus (strain ATCC MYA-4609 / CBS 101355 / FGSC A1100 / Af293) (Neosartorya fumigata).